The sequence spans 247 residues: Eukaryotic translation initiation factor 3 subunit J (247 aa).

2 disordered regions span residues 1-64 and 77-101; these read MADW…KTLK and EEKRKAEEKQKLEEEDKELTPEEQM. Residues 24–45 show a composition bias toward acidic residues; sequence EGEDEDDDIKESWDDDDEDEKK. Residues 43 to 108 adopt a coiled-coil conformation; sequence EKKEDEAKNT…EQMAEKLRRQ (66 aa).

It belongs to the eIF-3 subunit J family. In terms of assembly, component of the eukaryotic translation initiation factor 3 (eIF-3) complex.

The protein localises to the cytoplasm. Component of the eukaryotic translation initiation factor 3 (eIF-3) complex, which is involved in protein synthesis of a specialized repertoire of mRNAs and, together with other initiation factors, stimulates binding of mRNA and methionyl-tRNAi to the 40S ribosome. The eIF-3 complex specifically targets and initiates translation of a subset of mRNAs involved in cell proliferation. This chain is Eukaryotic translation initiation factor 3 subunit J, found in Nematostella vectensis (Starlet sea anemone).